The sequence spans 56 residues: MGHENIWYSHPRKYGPGSRYCRVCANHHGLIRKYGLNICRRCFRQYAADIGFKKLD.

The Zn(2+) site is built by C21, C24, C39, and C42.

It belongs to the universal ribosomal protein uS14 family. As to quaternary structure, component of the 40S small ribosomal subunit. Requires Zn(2+) as cofactor.

Its subcellular location is the cytoplasm. It localises to the cytosol. It is found in the rough endoplasmic reticulum. In Ixodes scapularis (Black-legged tick), this protein is Small ribosomal subunit protein uS14 (RpS29).